Consider the following 31-residue polypeptide: Dermaseptin-DI3 (31 aa).

It belongs to the frog skin active peptide (FSAP) family. Dermaseptin subfamily. In terms of tissue distribution, expressed by the skin glands.

It localises to the secreted. Its function is as follows. Antibacterial activity against Gram-positive bacteria S.aureus and E.faecalis, and Gram-negative bacteria P.aeruginosa and E.coli. The chain is Dermaseptin-DI3 from Phyllomedusa distincta (Monkey frog).